A 303-amino-acid polypeptide reads, in one-letter code: N-acetyl-D-glucosamine kinase (303 aa).

Residues Gly-4–Lys-11 and Gly-133–Phe-140 contribute to the ATP site. Zn(2+) is bound by residues His-157, Cys-177, Cys-179, and Cys-184.

It belongs to the ROK (NagC/XylR) family. NagK subfamily.

The catalysed reaction is N-acetyl-D-glucosamine + ATP = N-acetyl-D-glucosamine 6-phosphate + ADP + H(+). It functions in the pathway cell wall biogenesis; peptidoglycan recycling. Catalyzes the phosphorylation of N-acetyl-D-glucosamine (GlcNAc) derived from cell-wall degradation, yielding GlcNAc-6-P. This chain is N-acetyl-D-glucosamine kinase, found in Aliivibrio fischeri (strain ATCC 700601 / ES114) (Vibrio fischeri).